We begin with the raw amino-acid sequence, 398 residues long: Cholinephosphotransferase 1 (398 aa).

At Ala2 the chain carries N-acetylalanine. Over 2–62 (AAGAGARPAP…LLQWIPLWMA (61 aa)) the chain is Cytoplasmic. A helical transmembrane segment spans residues 63-83 (PNTITLIGLAINLVTTLVLIF). Asn64 is a CDP-choline binding site. The Lumenal segment spans residues 84–93 (YCPTVTEEAP). The helical transmembrane segment at 94–118 (YWTYLLCALGLFIYQSLDAIDGKQA) threads the bilayer. Mg(2+) is bound by residues Asp111 and Asp114. Arg119 contributes to the CDP-choline binding site. The Cytoplasmic portion of the chain corresponds to 119 to 125 (RRTNSCS). The chain crosses the membrane as a helical span at residues 126–150 (PLGELFDHGCDSLSTVFMAIGASIA). Residue Asp132 participates in Mg(2+) binding. His133 functions as the Proton acceptor in the catalytic mechanism. Mg(2+) is bound at residue Asp136. Residues 151 to 160 (VRLGTHPDWL) lie on the Lumenal side of the membrane. A helical membrane pass occupies residues 161 to 179 (FFCSFVGMFMFYCAHWQTY). Over 180 to 190 (VSGVLRFGRVD) the chain is Cytoplasmic. A helical transmembrane segment spans residues 191 to 207 (VTEIQVALVIVFMLSTF). Residues 208–222 (GGATMWDYTIPILEI) lie on the Lumenal side of the membrane. A helical membrane pass occupies residues 223 to 248 (KLKIVPVLGVVGGLIFSCSNYFHVIL). At 249-265 (HGGVGKNGSTIAGTSVL) the chain is on the cytoplasmic side. Residues 266–281 (SPGLHIGLIIILAIMI) traverse the membrane as a helical segment. The Lumenal segment spans residues 282-293 (YKKSATNMFEKH). Residues 294-316 (PCLYTLMFGCVFAKVAQKLVIAH) traverse the membrane as a helical segment. The Cytoplasmic segment spans residues 317–329 (MTKSELYLQDTVF). The chain crosses the membrane as a helical span at residues 330–339 (IGPGLLFLDQ). Residues 340-346 (YFNNFID) are Lumenal-facing. Residues 347–376 (EYVVLWIAMVISSFDMMIYFTSLCLQISRH) form a helical membrane-spanning segment. Residues 377–398 (LHLNIFKTSCQQAPEQVYKHID) lie on the Cytoplasmic side of the membrane.

Belongs to the CDP-alcohol phosphatidyltransferase class-I family. It depends on Mg(2+) as a cofactor. The cofactor is Mn(2+). Expressed in brain, heart, lung, liver, spleen, intestine and muscle. Down-regulated in kidney of type 2 diabetic KK/Ta mice.

Its subcellular location is the golgi apparatus membrane. The enzyme catalyses CDP-choline + a 1,2-diacyl-sn-glycerol = a 1,2-diacyl-sn-glycero-3-phosphocholine + CMP + H(+). It carries out the reaction 1-octadecanoyl-2-(5Z,8Z,11Z,14Z-eicosatetraenoyl)-sn-glycerol + CDP-choline = 1-octadecanoyl-2-(5Z,8Z,11Z,14Z-eicosatetraenoyl)-sn-glycero-3-phosphocholine + CMP + H(+). The catalysed reaction is 1-hexadecanoyl-2-(9Z-octadecenoyl)-sn-glycerol + CDP-choline = 1-hexadecanoyl-2-(9Z-octadecenoyl)-sn-glycero-3-phosphocholine + CMP + H(+). It catalyses the reaction 1-hexadecanoyl-2-(4Z,7Z,10Z,13Z,16Z,19Z-docosahexaenoyl)-sn-glycerol + CDP-choline = 1-hexadecanoyl-2-(4Z,7Z,10Z,13Z,16Z,19Z-docosahexaenoyl)-sn-glycero-3-phosphocholine + CMP + H(+). The enzyme catalyses 1,2-dioctanoyl-sn-glycerol + CDP-choline = 1,2-dioctanoyl-sn-glycero-3-phosphocholine + CMP + H(+). It functions in the pathway phospholipid metabolism; phosphatidylcholine biosynthesis; phosphatidylcholine from phosphocholine: step 2/2. Functionally, catalyzes the final step of de novo phosphatidylcholine (PC) synthesis, i.e. the transfer of choline phosphate from CDP-choline to the free hydroxyl of a diacylglycerol (DAG), producing a PC. It thereby plays a central role in the formation and maintenance of vesicular membranes. The chain is Cholinephosphotransferase 1 from Mus musculus (Mouse).